The chain runs to 531 residues: Cytochrome P450 monooxygenase acuC (531 aa).

A helical transmembrane segment spans residues 3–23 (PIVWLLGGAIALLVVVIRAAW). Cys-447 is a binding site for heme.

The protein belongs to the cytochrome P450 family. The cofactor is heme.

The protein resides in the endoplasmic reticulum membrane. It catalyses the reaction 3-methylphenol + reduced [NADPH--hemoprotein reductase] + O2 = 3-hydroxybenzyl alcohol + oxidized [NADPH--hemoprotein reductase] + H2O + H(+). Its pathway is secondary metabolite biosynthesis. Its function is as follows. Cytochrome P450 monooxygenase; part of the gene cluster that mediates the biosynthesis of aculins. The pathway begins with the synthesis of 6-methylsalicylic acid by the polyketide synthase (PKS) acuA via condensation of acetate and malonate units. The 6-methylsalicylic acid decarboxylase acuB then catalyzes the decarboxylation of 6-methylsalicylic acid to yield m-cresol (also known as 3-methylphenol). These first reactions occur in the cytosol. The intermediate m-cresol is then transported into the endoplasmic reticulum where the cytochrome P450 monooxygenase acuC converts it to m-hydroxybenzyl alcohol, which is further converted to gentisyl alcohol by the cytochrome P450 monooxygenase acuD. Gentisyl alcohol is further oxidized by the oxidoreductase acuE that probably catalyzes hydroxylation of the aromatic ring. The aromatic system might then be opened by oxidation through a Baeyer-Villiger type of oxidation, which could be catalyzed by acuF, with the carboxylic acid at C-1 subsequently reduced to an aldehyde by acuG. Subsequently, a hemiacetal is formed, before the dehydrogenase acuH would reduce the double bond between C-4 and C-6. Finally, keto-enol tautomerism results in formation of aculinic acid, which exists as two diastereomers (both R/S configurations at C-1) by non-enzymatic hemiacetal formation. The carboxypeptidase acuI could be involved in the linking of aculinic acid to an aculene A moiety produced by the aculene biosynthesis cluster and which leads to the production of aculin A. AcuI may also be involved in the attachment of proline to aculinic acid to form epi-aculins A and B. The protein is Cytochrome P450 monooxygenase acuC of Aspergillus aculeatus (strain ATCC 16872 / CBS 172.66 / WB 5094).